A 197-amino-acid chain; its full sequence is Small ribosomal subunit protein uS4A (197 aa).

The region spanning 107 to 181 (RRLQTQVYKL…VARRNAARKA (75 aa)) is the S4 RNA-binding domain. The segment at 160–197 (PTSPFGGARPGRVARRNAARKAEASGEAADEADEADEE) is disordered. Lysine 180 participates in a covalent cross-link: Glycyl lysine isopeptide (Lys-Gly) (interchain with G-Cter in ubiquitin). Serine 184 is modified (phosphoserine). Over residues 187–197 (AADEADEADEE) the composition is skewed to acidic residues.

Belongs to the universal ribosomal protein uS4 family. Component of the small ribosomal subunit (SSU). Mature yeast ribosomes consist of a small (40S) and a large (60S) subunit. The 40S small subunit contains 1 molecule of ribosomal RNA (18S rRNA) and 33 different proteins (encoded by 57 genes). The large 60S subunit contains 3 rRNA molecules (25S, 5.8S and 5S rRNA) and 46 different proteins (encoded by 81 genes). Interacts with snoRNA U3. uS11 interacts with MPP10. Component of the ribosomal small subunit (SSU) processome composed of at least 40 protein subunits and snoRNA U3.

The protein resides in the cytoplasm. It is found in the nucleus. The protein localises to the nucleolus. In terms of biological role, component of the ribosome, a large ribonucleoprotein complex responsible for the synthesis of proteins in the cell. The small ribosomal subunit (SSU) binds messenger RNAs (mRNAs) and translates the encoded message by selecting cognate aminoacyl-transfer RNA (tRNA) molecules. The large subunit (LSU) contains the ribosomal catalytic site termed the peptidyl transferase center (PTC), which catalyzes the formation of peptide bonds, thereby polymerizing the amino acids delivered by tRNAs into a polypeptide chain. The nascent polypeptides leave the ribosome through a tunnel in the LSU and interact with protein factors that function in enzymatic processing, targeting, and the membrane insertion of nascent chains at the exit of the ribosomal tunnel. uS4 is involved in nucleolar processing of pre-18S ribosomal RNA and ribosome assembly. The sequence is that of Small ribosomal subunit protein uS4A from Saccharomyces cerevisiae (strain ATCC 204508 / S288c) (Baker's yeast).